Reading from the N-terminus, the 889-residue chain is Protein argonaute 15 (889 aa).

2 disordered regions span residues 1–26 (MESH…SRKG) and 119–150 (EDAS…RMKR). Low complexity predominate over residues 122 to 132 (SSSGRTTTRRS). Residues 264–379 (PVIEFLLFNQ…IPLELCHLVP (116 aa)) form the PAZ domain. Residues 546 to 853 (FVLCVLPERK…AAAQVSQFVR (308 aa)) form the Piwi domain. Residues 857–878 (AASEGSGDGGAPPRPVPELPRL) form a disordered region.

The protein belongs to the argonaute family. Ago subfamily.

Functionally, probably involved in the RNA silencing pathway. May bind to short RNAs such as microRNAs (miRNAs) or short interfering RNAs (siRNAs), and represses the translation of mRNAs which are complementary to them. The protein is Protein argonaute 15 (AGO15) of Oryza sativa subsp. japonica (Rice).